A 183-amino-acid chain; its full sequence is Crossover junction endodeoxyribonuclease RuvC (183 aa).

Catalysis depends on residues aspartate 16, glutamate 75, and aspartate 147. The Mg(2+) site is built by aspartate 16, glutamate 75, and aspartate 147.

It belongs to the RuvC family. As to quaternary structure, homodimer which binds Holliday junction (HJ) DNA. The HJ becomes 2-fold symmetrical on binding to RuvC with unstacked arms; it has a different conformation from HJ DNA in complex with RuvA. In the full resolvosome a probable DNA-RuvA(4)-RuvB(12)-RuvC(2) complex forms which resolves the HJ. Mg(2+) is required as a cofactor.

It localises to the cytoplasm. The catalysed reaction is Endonucleolytic cleavage at a junction such as a reciprocal single-stranded crossover between two homologous DNA duplexes (Holliday junction).. Its function is as follows. The RuvA-RuvB-RuvC complex processes Holliday junction (HJ) DNA during genetic recombination and DNA repair. Endonuclease that resolves HJ intermediates. Cleaves cruciform DNA by making single-stranded nicks across the HJ at symmetrical positions within the homologous arms, yielding a 5'-phosphate and a 3'-hydroxyl group; requires a central core of homology in the junction. The consensus cleavage sequence is 5'-(A/T)TT(C/G)-3'. Cleavage occurs on the 3'-side of the TT dinucleotide at the point of strand exchange. HJ branch migration catalyzed by RuvA-RuvB allows RuvC to scan DNA until it finds its consensus sequence, where it cleaves and resolves the cruciform DNA. This is Crossover junction endodeoxyribonuclease RuvC from Azoarcus sp. (strain BH72).